We begin with the raw amino-acid sequence, 187 residues long: uncharacterized protein (187 aa).

A helical transmembrane segment spans residues 8–28; sequence FFILLAINFILAAGFVALVLL.

Its subcellular location is the membrane. This is an uncharacterized protein from Bacillus subtilis (strain 168).